We begin with the raw amino-acid sequence, 192 residues long: ATP-dependent Clp protease proteolytic subunit 1 (192 aa).

Ser92 acts as the Nucleophile in catalysis. His117 is an active-site residue.

Belongs to the peptidase S14 family. As to quaternary structure, fourteen ClpP subunits assemble into 2 heptameric rings which stack back to back to give a disk-like structure with a central cavity, resembling the structure of eukaryotic proteasomes.

The protein localises to the cytoplasm. The enzyme catalyses Hydrolysis of proteins to small peptides in the presence of ATP and magnesium. alpha-casein is the usual test substrate. In the absence of ATP, only oligopeptides shorter than five residues are hydrolyzed (such as succinyl-Leu-Tyr-|-NHMec, and Leu-Tyr-Leu-|-Tyr-Trp, in which cleavage of the -Tyr-|-Leu- and -Tyr-|-Trp bonds also occurs).. Functionally, cleaves peptides in various proteins in a process that requires ATP hydrolysis. Has a chymotrypsin-like activity. Plays a major role in the degradation of misfolded proteins. The protein is ATP-dependent Clp protease proteolytic subunit 1 of Chlamydia muridarum (strain MoPn / Nigg).